The following is a 383-amino-acid chain: Protein COS5 (383 aa).

Over 1 to 42 the chain is Cytoplasmic; the sequence is MKENELKNEKSVDVLSFKQLESQKIVLPQDLFRSSFTWFCYE. The helical transmembrane segment at 43–63 threads the bilayer; the sequence is IYKSLAFPIWMLLWLPLSVWW. Residues 64 to 72 are Extracellular-facing; the sequence is KLSNNCIYP. Residues 73 to 93 form a helical membrane-spanning segment; the sequence is LIVSLLVLFLGPIFVLVICGL. Over 94–232 the chain is Cytoplasmic; it reads SRKRSLSKQL…RSKLTWFLKR (139 aa). Residues 233–253 traverse the membrane as a helical segment; sequence IFTIYSLPLWLAFLNCICVSQ. Position 254 (histidine 254) is a topological domain, extracellular. A helical membrane pass occupies residues 255–275; the sequence is FCLAFRILCPGLFFLMMVWLF. The Cytoplasmic portion of the chain corresponds to 276–383; sequence QNMRTTALLV…SRNEESLMKK (108 aa).

It belongs to the DUP/COS family.

It is found in the membrane. This Saccharomyces cerevisiae (strain ATCC 204508 / S288c) (Baker's yeast) protein is Protein COS5 (COS5).